The chain runs to 198 residues: uncharacterized protein (198 aa).

This is an uncharacterized protein from Homo sapiens (Human).